A 32-amino-acid chain; its full sequence is Cathepsin B-like cysteine proteinase (32 aa).

A propeptide spans 1–22 (KPNYKRQFEPFSDELIHYINLE) (activation peptide).

The protein belongs to the peptidase C1 family.

Its function is as follows. Thiol protease. The sequence is that of Cathepsin B-like cysteine proteinase from Fasciola hepatica (Liver fluke).